The following is a 171-amino-acid chain: 3-hydroxydecanoyl-[acyl-carrier-protein] dehydratase (171 aa).

Residue H70 is part of the active site.

It belongs to the thioester dehydratase family. FabA subfamily. As to quaternary structure, homodimer.

Its subcellular location is the cytoplasm. The enzyme catalyses a (3R)-hydroxyacyl-[ACP] = a (2E)-enoyl-[ACP] + H2O. It catalyses the reaction (3R)-hydroxydecanoyl-[ACP] = (2E)-decenoyl-[ACP] + H2O. The catalysed reaction is (2E)-decenoyl-[ACP] = (3Z)-decenoyl-[ACP]. It participates in lipid metabolism; fatty acid biosynthesis. Its function is as follows. Necessary for the introduction of cis unsaturation into fatty acids. Catalyzes the dehydration of (3R)-3-hydroxydecanoyl-ACP to E-(2)-decenoyl-ACP and then its isomerization to Z-(3)-decenoyl-ACP. Can catalyze the dehydratase reaction for beta-hydroxyacyl-ACPs with saturated chain lengths up to 16:0, being most active on intermediate chain length. The polypeptide is 3-hydroxydecanoyl-[acyl-carrier-protein] dehydratase (Nitrosococcus oceani (strain ATCC 19707 / BCRC 17464 / JCM 30415 / NCIMB 11848 / C-107)).